Consider the following 417-residue polypeptide: WAT1-related protein At3g02690, chloroplastic (417 aa).

A chloroplast-targeting transit peptide spans 1-68 (MEWPWSAIAA…RRINGDSVVR (68 aa)). The tract at residues 67–92 (VRRSTTSNNSTEETESSSSSSSVDCV) is disordered. Residues 68–89 (RRSTTSNNSTEETESSSSSSSV) show a composition bias toward low complexity. A run of 10 helical transmembrane segments spans residues 122–142 (FLEWTVLISPFFFWGTAMVAM), 152–172 (FFVAAFRLIPAGLLLVAFAVY), 183–203 (AWFSIALFALVDATCFQGFLA), 213–233 (LGSVIIDSQPLTVAVLASFLF), 237–257 (IGIVRAGGLLLGVAGLLLLEV), 269–289 (LWGSGEWWMLLAAQSMAIGTV), 301–321 (IMATGWHMVIGGLPLLAISVI), 339–359 (VIALLYTSIFGSAVSYGVYFY), 369–389 (LSSLTFLTPMFASIFGYLYLN), and 392–412 (FSSLQLVGAAVTLVAIYLVNF). EamA domains lie at 133 to 255 (FFWG…LLLL) and 283 to 411 (SMAI…YLVN).

The protein belongs to the drug/metabolite transporter (DMT) superfamily. Plant drug/metabolite exporter (P-DME) (TC 2.A.7.4) family.

The protein resides in the plastid. Its subcellular location is the chloroplast membrane. In Arabidopsis thaliana (Mouse-ear cress), this protein is WAT1-related protein At3g02690, chloroplastic.